The following is a 245-amino-acid chain: Ureidoacrylate amidohydrolase RutB (245 aa).

Asp41 functions as the Proton acceptor in the catalytic mechanism. Lys150 is a catalytic residue. The active-site Nucleophile is Cys183.

This sequence belongs to the isochorismatase family. RutB subfamily.

The enzyme catalyses (Z)-3-ureidoacrylate + H2O + H(+) = (Z)-3-aminoacrylate + NH4(+) + CO2. It carries out the reaction (Z)-3-ureidoacrylate + H2O = (Z)-3-aminoacrylate + carbamate + H(+). The catalysed reaction is (Z)-2-methylureidoacrylate + H2O + H(+) = (Z)-2-methylaminoacrylate + NH4(+) + CO2. Hydrolyzes ureidoacrylate to form aminoacrylate and carbamate. The carbamate hydrolyzes spontaneously, thereby releasing one of the nitrogen atoms of the pyrimidine ring as ammonia and one of its carbon atoms as CO2. This is Ureidoacrylate amidohydrolase RutB from Pseudomonas syringae pv. syringae (strain B728a).